Reading from the N-terminus, the 170-residue chain is Urease accessory protein UreE (170 aa).

The segment at 137–170 (PFDPESGAYAHAGREQSHAHSHEHSHADGHTHAH) is disordered. Residues 148 to 170 (AGREQSHAHSHEHSHADGHTHAH) are compositionally biased toward basic and acidic residues.

Belongs to the UreE family.

The protein localises to the cytoplasm. In terms of biological role, involved in urease metallocenter assembly. Binds nickel. Probably functions as a nickel donor during metallocenter assembly. In Pseudoalteromonas translucida (strain TAC 125), this protein is Urease accessory protein UreE.